The primary structure comprises 148 residues: Small ribosomal subunit protein uS9 (148 aa).

Belongs to the universal ribosomal protein uS9 family.

The polypeptide is Small ribosomal subunit protein uS9 (RpS16) (Aedes aegypti (Yellowfever mosquito)).